Consider the following 555-residue polypeptide: Connector enhancer of kinase suppressor of ras 3 (555 aa).

One can recognise an SAM domain in the interval 7–72 (WSPKQVVDWT…LEAVDLLCAL (66 aa)). Positions 80-174 (NMKNLVLKLR…TTVQKDCFVA (95 aa)) constitute a CRIC domain. One can recognise a PDZ domain in the interval 211–293 (EVHLPNIKPG…GVVLLLKKRP (83 aa)). Disordered stretches follow at residues 309-334 (WKPPLVQTSPPPATTQSPESTMDTSL), 347-390 (PPPP…FLDQ), and 517-537 (IPFQEEGTKKKSGSSATKSSS). Residues 325 to 546 (SPESTMDTSL…STEPSLLVSW (222 aa)) enclose the DUF1170 domain. S381 and S383 each carry phosphoserine.

This sequence belongs to the CNKSR family. In terms of assembly, interacts with epithelial sodium channel ENaC. Interacts directly with SCNN1A (ENaC subunit alpha) and SCNN1B (ENaC subunit beta) C-terminal tails. Interacts with ENaC regulatory proteins NEDD4L, RAF1 and SGK1.

It is found in the cytoplasm. The protein localises to the apical cell membrane. Functionally, involved in transepithelial sodium transport. Regulates aldosterone-induced and epithelial sodium channel (ENaC)-mediated sodium transport through regulation of ENaC cell surface expression. Acts as a scaffold protein coordinating the assembly of an ENaC-regulatory complex (ERC). This chain is Connector enhancer of kinase suppressor of ras 3 (CNKSR3), found in Homo sapiens (Human).